The chain runs to 189 residues: MARAQWLRAAVLGANDGLVSVASLMIGIGAVNENNKAMLVSGLAGLVAGACSMAIGEFVSVYAQYDIEVTQIERDGDIDGADAAAAREKLPSPTQAAFASALAFAIGGLLPLLTSGFIKPWGPRVGVVCAASSVGLAGFGAAGGYLGGANMVRSGTRVLLGGWLAMLITYAVLRLFATIFHGMNISSSA.

Residues 1-10 are Cytoplasmic-facing; the sequence is MARAQWLRAA. A helical membrane pass occupies residues 11–31; the sequence is VLGANDGLVSVASLMIGIGAV. The Vacuolar segment spans residues 32 to 38; the sequence is NENNKAM. A helical membrane pass occupies residues 39-59; sequence LVSGLAGLVAGACSMAIGEFV. Topologically, residues 60 to 97 are cytoplasmic; it reads SVYAQYDIEVTQIERDGDIDGADAAAAREKLPSPTQAA. The helical transmembrane segment at 98 to 118 threads the bilayer; the sequence is FASALAFAIGGLLPLLTSGFI. The Vacuolar segment spans residues 119 to 124; that stretch reads KPWGPR. A helical transmembrane segment spans residues 125 to 145; the sequence is VGVVCAASSVGLAGFGAAGGY. Over 146 to 159 the chain is Cytoplasmic; it reads LGGANMVRSGTRVL. A helical membrane pass occupies residues 160–180; it reads LGGWLAMLITYAVLRLFATIF. Topologically, residues 181-189 are vacuolar; the sequence is HGMNISSSA.

This sequence belongs to the CCC1 family.

The protein resides in the vacuole membrane. The enzyme catalyses Fe(2+)(in) = Fe(2+)(out). Functionally, probable vacuolar iron transporter that may be involved in the regulation of iron distribution throughout the plant. The chain is Vacuolar iron transporter homolog 2 from Oryza sativa subsp. japonica (Rice).